The primary structure comprises 318 residues: Ribosomal RNA small subunit methyltransferase H (318 aa).

Residues 37–39 (GGH), Asp-56, Tyr-83, Asp-104, and Gln-111 each bind S-adenosyl-L-methionine. The segment at 293 to 318 (EEEIAENRRAAPARLRGAQRIREDAE) is disordered.

The protein belongs to the methyltransferase superfamily. RsmH family.

The protein resides in the cytoplasm. The enzyme catalyses cytidine(1402) in 16S rRNA + S-adenosyl-L-methionine = N(4)-methylcytidine(1402) in 16S rRNA + S-adenosyl-L-homocysteine + H(+). Its function is as follows. Specifically methylates the N4 position of cytidine in position 1402 (C1402) of 16S rRNA. The chain is Ribosomal RNA small subunit methyltransferase H from Streptomyces avermitilis (strain ATCC 31267 / DSM 46492 / JCM 5070 / NBRC 14893 / NCIMB 12804 / NRRL 8165 / MA-4680).